The sequence spans 380 residues: Succinyl-diaminopimelate desuccinylase (380 aa).

Zn(2+) is bound at residue His69. Asp71 is an active-site residue. Asp102 contributes to the Zn(2+) binding site. Glu135 serves as the catalytic Proton acceptor. Positions 136, 164, and 353 each coordinate Zn(2+).

This sequence belongs to the peptidase M20A family. DapE subfamily. In terms of assembly, homodimer. Requires Zn(2+) as cofactor. Co(2+) serves as cofactor.

The catalysed reaction is N-succinyl-(2S,6S)-2,6-diaminopimelate + H2O = (2S,6S)-2,6-diaminopimelate + succinate. It functions in the pathway amino-acid biosynthesis; L-lysine biosynthesis via DAP pathway; LL-2,6-diaminopimelate from (S)-tetrahydrodipicolinate (succinylase route): step 3/3. Its function is as follows. Catalyzes the hydrolysis of N-succinyl-L,L-diaminopimelic acid (SDAP), forming succinate and LL-2,6-diaminopimelate (DAP), an intermediate involved in the bacterial biosynthesis of lysine and meso-diaminopimelic acid, an essential component of bacterial cell walls. The polypeptide is Succinyl-diaminopimelate desuccinylase (Ruegeria pomeroyi (strain ATCC 700808 / DSM 15171 / DSS-3) (Silicibacter pomeroyi)).